A 489-amino-acid chain; its full sequence is N-succinylglutamate 5-semialdehyde dehydrogenase (489 aa).

Residue 224–229 (GSAKVG) participates in NAD(+) binding. Residues Glu247 and Cys281 contribute to the active site.

The protein belongs to the aldehyde dehydrogenase family. AstD subfamily.

The catalysed reaction is N-succinyl-L-glutamate 5-semialdehyde + NAD(+) + H2O = N-succinyl-L-glutamate + NADH + 2 H(+). It functions in the pathway amino-acid degradation; L-arginine degradation via AST pathway; L-glutamate and succinate from L-arginine: step 4/5. In terms of biological role, catalyzes the NAD-dependent reduction of succinylglutamate semialdehyde into succinylglutamate. The polypeptide is N-succinylglutamate 5-semialdehyde dehydrogenase (Chromohalobacter salexigens (strain ATCC BAA-138 / DSM 3043 / CIP 106854 / NCIMB 13768 / 1H11)).